We begin with the raw amino-acid sequence, 258 residues long: MIPPADSLLKYDTPVLVSRNTEKRSPTARPLKVTIQQPGPSSTSPQPPKAKLPSTSCVPDPTKQAEEILNAILPPREWVEDTQLWIQQVSSTPSTRMDVVHLQEQLDLKLQQRQARETGICPVRRELYSQCFDELIREVTINCAERGLLLLRVRDEIHMTIAAYQTLYESSVAFGMRKALQAEQGKSDMERKITELETEKRDLERQVNEQKAKCEATEKRESERRQVEEKKHNEEIQFLKRTNQQLKAQLEGIIAPKK.

Disordered stretches follow at residues 1–60 (MIPP…CVPD) and 202–231 (DLERQVNEQKAKCEATEKRESERRQVEEKK). The stretch at 176–255 (MRKALQAEQG…LKAQLEGIIA (80 aa)) forms a coiled coil.

This sequence belongs to the inner dynein arm light chain family. Interacts with CFAP45. Interacts with DYNC1H1. In terms of tissue distribution, predominantly expressed in the testis, also detected at lower levels in several tissues expressing cilia. Strongly expressed in elongating spermatid cells (at protein level).

The protein localises to the cell projection. The protein resides in the cilium. Its subcellular location is the flagellum. It is found in the dynein axonemal particle. It localises to the cytoplasm. In terms of biological role, involved in sperm flagellum assembly. The chain is Axonemal dynein light intermediate polypeptide 1 from Mus musculus (Mouse).